Here is a 616-residue protein sequence, read N- to C-terminus: Dihydroxy-acid dehydratase (616 aa).

Asp-81 is a binding site for Mg(2+). Residue Cys-122 participates in [2Fe-2S] cluster binding. Residues Asp-123 and Lys-124 each coordinate Mg(2+). Lys-124 bears the N6-carboxylysine mark. Cys-195 contributes to the [2Fe-2S] cluster binding site. Glu-491 contacts Mg(2+). Ser-517 acts as the Proton acceptor in catalysis.

It belongs to the IlvD/Edd family. Homodimer. Requires [2Fe-2S] cluster as cofactor. Mg(2+) is required as a cofactor.

The enzyme catalyses (2R)-2,3-dihydroxy-3-methylbutanoate = 3-methyl-2-oxobutanoate + H2O. It catalyses the reaction (2R,3R)-2,3-dihydroxy-3-methylpentanoate = (S)-3-methyl-2-oxopentanoate + H2O. It functions in the pathway amino-acid biosynthesis; L-isoleucine biosynthesis; L-isoleucine from 2-oxobutanoate: step 3/4. It participates in amino-acid biosynthesis; L-valine biosynthesis; L-valine from pyruvate: step 3/4. Its function is as follows. Functions in the biosynthesis of branched-chain amino acids. Catalyzes the dehydration of (2R,3R)-2,3-dihydroxy-3-methylpentanoate (2,3-dihydroxy-3-methylvalerate) into 2-oxo-3-methylpentanoate (2-oxo-3-methylvalerate) and of (2R)-2,3-dihydroxy-3-methylbutanoate (2,3-dihydroxyisovalerate) into 2-oxo-3-methylbutanoate (2-oxoisovalerate), the penultimate precursor to L-isoleucine and L-valine, respectively. The sequence is that of Dihydroxy-acid dehydratase from Methylocella silvestris (strain DSM 15510 / CIP 108128 / LMG 27833 / NCIMB 13906 / BL2).